The following is a 539-amino-acid chain: Alpha-copaene synthase (539 aa).

Mg(2+) is bound by residues Asp-290 and Asp-294. Asp-290, Asp-294, and Arg-432 together coordinate substrate. The DDXXD motif motif lies at 290-294 (DDTFD).

The protein belongs to the terpene synthase family. Monomer. Mg(2+) serves as cofactor. It depends on Mn(2+) as a cofactor.

Its subcellular location is the cytoplasm. It catalyses the reaction (2E,6E)-farnesyl diphosphate = alpha-copaene + diphosphate. It carries out the reaction (2E,6E)-farnesyl diphosphate = (+)-germacrene D + diphosphate. The catalysed reaction is (2E,6E)-farnesyl diphosphate = (-)-(E)-beta-caryophyllene + diphosphate. The enzyme catalyses (2E,6E)-farnesyl diphosphate = delta-cadinene + diphosphate. It participates in secondary metabolite biosynthesis; terpenoid biosynthesis. Functionally, converts farnesyl diphosphate to the bicyclic olefins alpha-copaene, (E)-beta-caryophyllene, and to the macrocyclic sesquiterpene germacrene D. Also mediates the biosynthesis of minor sesquiterpene hydrocarbons including delta-cadinene. Involved in indirect defense by producing volatile signals attracting natural enemies of herbivores. This is Alpha-copaene synthase from Zea mays (Maize).